Consider the following 409-residue polypeptide: Microfibrillar-associated protein 3-like (409 aa).

Positions 1–28 (MGLQKSHLTVCLPPSVPFLILVSTLATA) are cleaved as a signal peptide. Topologically, residues 29–148 (KSVTNSTLNG…TLRVIFTSGD (120 aa)) are extracellular. Residues asparagine 33, asparagine 37, asparagine 67, asparagine 111, and asparagine 135 are each glycosylated (N-linked (GlcNAc...) asparagine). Positions 47 to 141 (PVIIARTDHI…GTINNTVTLR (95 aa)) constitute an Ig-like C2-type domain. Cysteine 68 and cysteine 125 form a disulfide bridge. Residues 149 to 169 (MGVYYMVVCLVAFTIVMILNI) form a helical membrane-spanning segment. Residues 170 to 409 (TRLCMMSSHL…NTCIIYESHV (240 aa)) are Cytoplasmic-facing. Tyrosine 287 is subject to Phosphotyrosine. A phosphoserine mark is found at serine 298, serine 303, serine 306, and serine 307. A disordered region spans residues 319 to 395 (VSVHPQSKRD…AHLETTEPAV (77 aa)). The segment covering 325–340 (SKRDHVDDQEGGHFEV) has biased composition (basic and acidic residues). A compositionally biased stretch (low complexity) spans 356 to 373 (TAEPSTDITTTELTSEET).

The protein localises to the cell membrane. It is found in the nucleus. It localises to the cytoplasm. May participate in the nuclear signaling of EGFR and MAPK1/ERK2. This is Microfibrillar-associated protein 3-like (Mfap3l) from Mus musculus (Mouse).